A 178-amino-acid chain; its full sequence is MSTTPAVAEDLIVLGKIVSVHGVRGEVKVYSFTDPIDNVLDYRHWTLRRDGEVKKVELASGRLQGKVLVAKLKGLDDREIARTYAGFEICVPRSELPDLEEGEFYWYQLQGLKVIDQAGQLLGVVDHLFETGANDVMVVKACAGSLDDRERLLPYTDQCVLSIDLAAGEMRVDWDADF.

A PRC barrel domain is found at 101–178; the sequence is EGEFYWYQLQ…EMRVDWDADF (78 aa).

This sequence belongs to the RimM family. In terms of assembly, binds ribosomal protein uS19.

The protein localises to the cytoplasm. Its function is as follows. An accessory protein needed during the final step in the assembly of 30S ribosomal subunit, possibly for assembly of the head region. Essential for efficient processing of 16S rRNA. May be needed both before and after RbfA during the maturation of 16S rRNA. It has affinity for free ribosomal 30S subunits but not for 70S ribosomes. The chain is Ribosome maturation factor RimM from Ectopseudomonas mendocina (strain ymp) (Pseudomonas mendocina).